Consider the following 387-residue polypeptide: Phosphoglycerate kinase (387 aa).

Substrate is bound by residues 21 to 23 (DLN), Arg-36, 59 to 62 (HLGR), Arg-114, and Arg-147. ATP contacts are provided by residues Lys-198, Glu-314, and 340 to 343 (GGDT).

It belongs to the phosphoglycerate kinase family. As to quaternary structure, monomer.

It is found in the cytoplasm. It catalyses the reaction (2R)-3-phosphoglycerate + ATP = (2R)-3-phospho-glyceroyl phosphate + ADP. It functions in the pathway carbohydrate degradation; glycolysis; pyruvate from D-glyceraldehyde 3-phosphate: step 2/5. The chain is Phosphoglycerate kinase from Erwinia tasmaniensis (strain DSM 17950 / CFBP 7177 / CIP 109463 / NCPPB 4357 / Et1/99).